The chain runs to 205 residues: N-(5'-phosphoribosyl)anthranilate isomerase (205 aa).

This sequence belongs to the TrpF family.

It catalyses the reaction N-(5-phospho-beta-D-ribosyl)anthranilate = 1-(2-carboxyphenylamino)-1-deoxy-D-ribulose 5-phosphate. The protein operates within amino-acid biosynthesis; L-tryptophan biosynthesis; L-tryptophan from chorismate: step 3/5. In Phocaeicola vulgatus (strain ATCC 8482 / DSM 1447 / JCM 5826 / CCUG 4940 / NBRC 14291 / NCTC 11154) (Bacteroides vulgatus), this protein is N-(5'-phosphoribosyl)anthranilate isomerase.